Consider the following 388-residue polypeptide: Pepsin F (388 aa).

The N-terminal stretch at 1–15 (MKWLGLLGLVALSEC) is a signal peptide. The propeptide at 16–58 (LVTIPLMKVKSMRENLRENDILLDYLEKHPYRPTYKLLSGQQD) is activation peptide. The 312-residue stretch at 74–385 (YIGIISIGTP…DRANNRIGLA (312 aa)) folds into the Peptidase A1 domain. Residue D92 is part of the active site. 2 cysteine pairs are disulfide-bonded: C105-C110 and C266-C270. Residue D275 is part of the active site. Cysteines 309 and 343 form a disulfide.

Belongs to the peptidase A1 family.

The protein resides in the secreted. It catalyses the reaction Preferential cleavage: hydrophobic, preferably aromatic, residues in P1 and P1' positions. Cleaves 1-Phe-|-Val-2, 4-Gln-|-His-5, 13-Glu-|-Ala-14, 14-Ala-|-Leu-15, 15-Leu-|-Tyr-16, 16-Tyr-|-Leu-17, 23-Gly-|-Phe-24, 24-Phe-|-Phe-25 and 25-Phe-|-Tyr-26 bonds in the B chain of insulin.. Shows particularly broad specificity; although bonds involving phenylalanine and leucine are preferred, many others are also cleaved to some extent. The protein is Pepsin F of Oryctolagus cuniculus (Rabbit).